A 574-amino-acid polypeptide reads, in one-letter code: NADH-ubiquinone oxidoreductase chain 5 (574 aa).

16 consecutive transmembrane segments (helical) span residues 10 to 30 (VASK…LYMV), 50 to 70 (MMMT…VVMI), 87 to 107 (FINR…MLIF), 111 to 131 (LIIL…LVIY), 141 to 161 (GMIT…AIAW), 181 to 203 (YQAL…SSWL), 211 to 231 (TPVS…FLLI), 240 to 260 (VWWF…MAGL), 280 to 300 (LGMM…FHMV), 301 to 321 (THAM…HSHM), 340 to 360 (TSCL…SGFY), 381 to 401 (LILF…MCVV), 423 to 443 (MLLL…ILPL), 458 to 478 (TLML…TTNM), 489 to 509 (IINY…QFMM), and 554 to 574 (TPMN…LVAI).

This sequence belongs to the complex I subunit 5 family.

The protein resides in the mitochondrion inner membrane. The catalysed reaction is a ubiquinone + NADH + 5 H(+)(in) = a ubiquinol + NAD(+) + 4 H(+)(out). In terms of biological role, core subunit of the mitochondrial membrane respiratory chain NADH dehydrogenase (Complex I) that is believed to belong to the minimal assembly required for catalysis. Complex I functions in the transfer of electrons from NADH to the respiratory chain. The immediate electron acceptor for the enzyme is believed to be ubiquinone. The protein is NADH-ubiquinone oxidoreductase chain 5 (ND5) of Lumbricus terrestris (Common earthworm).